The primary structure comprises 218 residues: LexA repressor (218 aa).

Residues 28–48 constitute a DNA-binding region (H-T-H motif); that stretch reads RAEIAAEFGFSSPNSAEEHLR. Catalysis depends on for autocatalytic cleavage activity residues serine 136 and lysine 173.

This sequence belongs to the peptidase S24 family. Homodimer.

The catalysed reaction is Hydrolysis of Ala-|-Gly bond in repressor LexA.. In terms of biological role, represses a number of genes involved in the response to DNA damage (SOS response), including recA and lexA. In the presence of single-stranded DNA, RecA interacts with LexA causing an autocatalytic cleavage which disrupts the DNA-binding part of LexA, leading to derepression of the SOS regulon and eventually DNA repair. In Cupriavidus metallidurans (strain ATCC 43123 / DSM 2839 / NBRC 102507 / CH34) (Ralstonia metallidurans), this protein is LexA repressor.